The primary structure comprises 26 residues: RALATQLPVIPRSQVTFLAPVTRPEK.

Belongs to the FAH family. The cofactor is Ca(2+). Mg(2+) serves as cofactor.

Its function is as follows. May have hydrolase activity. The polypeptide is Fumarylacetoacetate hydrolase domain-containing protein 2A (Mesocricetus auratus (Golden hamster)).